The sequence spans 383 residues: Interleukin-13 receptor subunit alpha-2 (383 aa).

Positions Met-1–Ser-21 are cleaved as a signal peptide. Over Leu-22 to Lys-334 the chain is Extracellular. 3 consecutive Fibronectin type-III domains span residues Pro-28–Gly-128, Glu-131–Ser-219, and Pro-234–Asp-332. Cys-59 and Cys-107 are joined by a disulfide. A glycan (N-linked (GlcNAc...) asparagine) is linked at Asn-109. Residues Cys-139 and Cys-149 are joined by a disulfide bond. The N-linked (GlcNAc...) asparagine glycan is linked to Asn-162. Cys-178 and Cys-191 are oxidised to a cystine. N-linked (GlcNAc...) asparagine glycosylation is found at Asn-209 and Asn-293. Cys-263 and Cys-310 form a disulfide bridge. The short motif at Trp-316–Ser-320 is the WSXWS motif element. Residues Ile-335 to Ile-355 form a helical membrane-spanning segment. The Cytoplasmic segment spans residues Val-356 to Cys-383.

This sequence belongs to the type I cytokine receptor family. Type 5 subfamily. In terms of assembly, interacts with IL4RA. Interacts with high affinity to interleukin-13 (IL13), but not to interleukin-4 (IL4). In terms of processing, cleaved by MMP8 leading to a soluble form that is also able to interact with IL13.

Its subcellular location is the cell membrane. The protein localises to the secreted. Functionally, cell surface receptor that plays a role in the regulation of IL-13-mediated responses. Functions as a decoy receptor that inhibits IL-13- and IL-4-mediated signal transduction via the JAK-STAT pathway and thereby modulates immune responses and inflammation. Serves as a functional signaling receptor for IL-13 in an alternative pathway involving AP-1 ultimately leading to the production of TGFB1. In Mus musculus (Mouse), this protein is Interleukin-13 receptor subunit alpha-2 (Il13ra2).